Here is a 595-residue protein sequence, read N- to C-terminus: Alginate biosynthesis sensor protein KinB (595 aa).

The Cytoplasmic portion of the chain corresponds to 1 to 12 (MSMPLPMKLRTR). The chain crosses the membrane as a helical span at residues 13–33 (LFLSISALITVSLFGLLLGLF). Over 34 to 167 (SVMQLGRAQE…SDAETSARHR (134 aa)) the chain is Periplasmic. Residues 168 to 188 (AYLVAGLLGLVGVAILLIGFV) traverse the membrane as a helical segment. At 189-595 (TAHSIARRFG…GARFYMLLPV (407 aa)) the chain is on the cytoplasmic side. In terms of domain architecture, HAMP spans 195–247 (RRFGAPIETLARAADRIGEGDFDVTLPMTNVAEVGQLTRRFGLMAEALRQYRK). In terms of domain architecture, PAS spans 258-323 (RRLQAVLDSI…AVEKALLGEV (66 aa)). The PAC domain maps to 327 to 369 (AMPDLVVDVAGESRLLAWSLYPVTHPGGHSVGAVLVVRDVTEQ). Positions 382 to 595 (RASHELRTPV…GARFYMLLPV (214 aa)) constitute a Histidine kinase domain. The residue at position 385 (His385) is a Phosphohistidine; by autocatalysis.

In terms of processing, autophosphorylated.

The protein resides in the cell inner membrane. The catalysed reaction is ATP + protein L-histidine = ADP + protein N-phospho-L-histidine.. Functionally, member of the two-component regulatory system AlgB/KinB involved in regulation of alginate biosynthesis genes. KinB functions as a membrane-associated protein kinase that phosphorylates AlgB, probably in response to environmental signals. This Pseudomonas aeruginosa protein is Alginate biosynthesis sensor protein KinB (kinB).